Consider the following 257-residue polypeptide: UPF0246 protein YaaA (257 aa).

The protein belongs to the UPF0246 family.

The protein is UPF0246 protein YaaA of Salmonella schwarzengrund (strain CVM19633).